Reading from the N-terminus, the 444-residue chain is NAD(P)-specific glutamate dehydrogenase (444 aa).

Positions 88, 109, and 112 each coordinate substrate. The Proton donor role is filled by K124. G163 contacts substrate. Residues T207 and N238 each contribute to the NADP(+) site. S376 is a binding site for substrate.

It belongs to the Glu/Leu/Phe/Val dehydrogenases family. As to quaternary structure, homohexamer.

It catalyses the reaction L-glutamate + NAD(+) + H2O = 2-oxoglutarate + NH4(+) + NADH + H(+). The catalysed reaction is L-glutamate + NADP(+) + H2O = 2-oxoglutarate + NH4(+) + NADPH + H(+). Functionally, catalyzes the reversible oxidative deamination of glutamate to alpha-ketoglutarate and ammonia. P.ruminicola possess both NADP(H)- and NAD(H)-dependent activities on the same enzyme, suggesting that both anabolic and catabolic forms of the enzyme might occur. This is NAD(P)-specific glutamate dehydrogenase (gdhA) from Xylanibacter ruminicola (Prevotella ruminicola).